A 671-amino-acid chain; its full sequence is Replication protein A 70 kDa DNA-binding subunit (671 aa).

Disordered regions lie at residues 143-166 (QVSQ…PAVN) and 190-219 (MNKT…LQIS). Low complexity predominate over residues 199 to 213 (NNNNNNNNNGNNKNN). Positions 240-322 (QTIKVRITKK…NKGDHTVTVN (83 aa)) form a DNA-binding region, OB. The C4-type zinc finger occupies 530-549 (CFSCKKKIARNNEVWTCINC).

It belongs to the replication factor A protein 1 family. Component of the replication protein A complex (RPA), a heterotrimeric complex composed of RPA1, RPA2/TEB2 and RPA3/TEB3.

Its function is as follows. As part of the heterotrimeric replication protein A (RPA) complex, binds and stabilizes single-stranded DNA intermediates, that form during DNA replication or upon DNA stress. It prevents their reannealing and in parallel, recruits and activates different proteins and complexes involved in DNA metabolism. Thereby, it plays an essential role both in DNA replication and the cellular response to DNA damage. In the cellular response to DNA damage, the RPA complex controls DNA repair and DNA damage checkpoint activation. This chain is Replication protein A 70 kDa DNA-binding subunit, found in Tetrahymena thermophila (strain SB210).